The chain runs to 377 residues: MAHPMATHPRLQRRHGARSGSSRCRHRRPVPRRRSRSRPRWRAARAHRRHHRRSGPGIGDHPADRARHRRGGRLPAQPRRAAARRPDPRGGANTDHHAAPRHRRAAAGTSHRRRDRLASNDSQHHAHPTATGPRPRTTVRRRRQPRITHPVGTADHRTRTALRRPRPADQLSAALRSALEETRRLSGLADQLLTLARADRPESHPSAKAVPITPLLHESVARFAATGADITTRAEPDLFVSIDPDHLRRILTAVLDNAITHGDGEIAVTAHARDGAVDIGVRDHGPGFADHFLPVAFDRFTRADTARGGRGSGLGLAIVAALTTTHGGHANATNHPDGGAELRITLPTPRPPFHEELPRITSSDTKDPNREHDTSDQ.

Disordered regions lie at residues 1 to 169 (MAHP…RPAD) and 346 to 377 (LPTPRPPFHEELPRITSSDTKDPNREHDTSDQ). Over residues 10-54 (RLQRRHGARSGSSRCRHRRPVPRRRSRSRPRWRAARAHRRHHRRS) the composition is skewed to basic residues. A compositionally biased stretch (basic and acidic residues) spans 84 to 98 (RRPDPRGGANTDHHA). 2 stretches are compositionally biased toward basic residues: residues 99-115 (APRHRRAAAGTSHRRRD) and 137-146 (TTVRRRRQPR). Positions 146 to 350 (RITHPVGTAD…ELRITLPTPR (205 aa)) constitute a Histidine kinase domain. Histidine 149 bears the Phosphohistidine; by autocatalysis mark. Residues 352 to 377 (PFHEELPRITSSDTKDPNREHDTSDQ) show a composition bias toward basic and acidic residues.

Post-translationally, autophosphorylated.

The catalysed reaction is ATP + protein L-histidine = ADP + protein N-phospho-L-histidine.. Its function is as follows. Member of the two-component system HK/TcrA. Phosphorylates TcrA. The chain is Probable sensor histidine kinase HK from Mycobacterium tuberculosis (strain CDC 1551 / Oshkosh).